The primary structure comprises 280 residues: 4-diphosphocytidyl-2-C-methyl-D-erythritol kinase (280 aa).

Lys-9 is a catalytic residue. Residue 93-103 coordinates ATP; that stretch reads PVAAGLGGGSS. Asp-135 is an active-site residue.

This sequence belongs to the GHMP kinase family. IspE subfamily.

It catalyses the reaction 4-CDP-2-C-methyl-D-erythritol + ATP = 4-CDP-2-C-methyl-D-erythritol 2-phosphate + ADP + H(+). It participates in isoprenoid biosynthesis; isopentenyl diphosphate biosynthesis via DXP pathway; isopentenyl diphosphate from 1-deoxy-D-xylulose 5-phosphate: step 3/6. In terms of biological role, catalyzes the phosphorylation of the position 2 hydroxy group of 4-diphosphocytidyl-2C-methyl-D-erythritol. This chain is 4-diphosphocytidyl-2-C-methyl-D-erythritol kinase, found in Syntrophotalea carbinolica (strain DSM 2380 / NBRC 103641 / GraBd1) (Pelobacter carbinolicus).